The sequence spans 138 residues: MLCAIKSTGYRYPRTGALNLLRGRPFNMATRKITTERIPGPPKLPREEQEEFERLQRIATSQEAIDQYNAQATGDRTKESLNSPLLTKNDIGSFSPEFSKTIPEFEGDVNPKTGEVGGPKQDPLRHGDYSFNGRVTDF.

Residues Met-1–Lys-32 constitute a mitochondrion transit peptide. Over residues Gln-71–Phe-98 the composition is skewed to polar residues. A disordered region spans residues Gln-71–Phe-138.

It belongs to the SDHAF4 family. In terms of assembly, interacts with SDH1 in its FAD-bound form.

The protein localises to the mitochondrion matrix. Its function is as follows. Plays an essential role in the assembly of succinate dehydrogenase (SDH), an enzyme complex (also referred to as respiratory complex II) that is a component of both the tricarboxylic acid (TCA) cycle and the mitochondrial electron transport chain, and which couples the oxidation of succinate to fumarate with the reduction of ubiquinone (coenzyme Q) to ubiquinol. Binds to the flavoprotein subunit SDH1 in its FAD-bound form, blocking the generation of excess reactive oxygen species (ROS) and facilitating its assembly with the iron-sulfur protein subunit SDH2 into the SDH catalytic dimer. This Saccharomyces cerevisiae (strain ATCC 204508 / S288c) (Baker's yeast) protein is Succinate dehydrogenase assembly factor 4, mitochondrial.